Here is a 357-residue protein sequence, read N- to C-terminus: Peptide chain release factor 1 (357 aa).

Gln-234 bears the N5-methylglutamine mark. A disordered region spans residues 283–313 (SKKQEQRSSNRKQQVGSGDRSERIRTYNFPQ).

Belongs to the prokaryotic/mitochondrial release factor family. Methylated by PrmC. Methylation increases the termination efficiency of RF1.

It localises to the cytoplasm. Peptide chain release factor 1 directs the termination of translation in response to the peptide chain termination codons UAG and UAA. This is Peptide chain release factor 1 from Borrelia garinii subsp. bavariensis (strain ATCC BAA-2496 / DSM 23469 / PBi) (Borreliella bavariensis).